The following is a 167-amino-acid chain: Large ribosomal subunit protein bL9 (167 aa).

The protein belongs to the bacterial ribosomal protein bL9 family.

Its function is as follows. Binds to the 23S rRNA. The protein is Large ribosomal subunit protein bL9 of Chlamydia muridarum (strain MoPn / Nigg).